A 373-amino-acid polypeptide reads, in one-letter code: MTVYNFAAGPATLPDPVIKQIQEELPSLQGSGMSILEISHRSQMFDKIIDTAKQDIKDLMHVPDNYHILFFQGGGTGQFAAVPMNLATKHKRIALLDSGHWATRAGDEAANLGVTVDVLDSTKDKHYQELPHMPHAISASDYDYLHITTNNTIEGTAYHTLPEHGDVTLVGDLSSNFMAEEYQVSDFGLIFGGVQKNLGPAGVTVVIVRDDLVNHVDHIPSILNYELFVKKNSMFNTPPVFAIYATGLVLKWLKQQGGIAGIEALNKKKSALLYDFLDQSTLFHNDIKKTDRSLTNIPFKTTDPVLDKQVIAEADQAGLKNLKGHRSVGGLRASLYNAMPLAGVQALVDFLYNFEKQHKNNTMGKRYVSSKNI.

Residue Arg41 coordinates L-glutamate. Residues 75–76, Trp101, Thr152, Asp172, and Gln195 each bind pyridoxal 5'-phosphate; that span reads GT. Lys196 carries the N6-(pyridoxal phosphate)lysine modification. 236–237 lines the pyridoxal 5'-phosphate pocket; it reads NT.

It belongs to the class-V pyridoxal-phosphate-dependent aminotransferase family. SerC subfamily. Homodimer. It depends on pyridoxal 5'-phosphate as a cofactor.

The protein resides in the cytoplasm. The enzyme catalyses O-phospho-L-serine + 2-oxoglutarate = 3-phosphooxypyruvate + L-glutamate. The catalysed reaction is 4-(phosphooxy)-L-threonine + 2-oxoglutarate = (R)-3-hydroxy-2-oxo-4-phosphooxybutanoate + L-glutamate. Its pathway is amino-acid biosynthesis; L-serine biosynthesis; L-serine from 3-phospho-D-glycerate: step 2/3. Its function is as follows. Catalyzes the reversible conversion of 3-phosphohydroxypyruvate to phosphoserine and of 3-hydroxy-2-oxo-4-phosphonooxybutanoate to phosphohydroxythreonine. The chain is Phosphoserine aminotransferase from Lactobacillus helveticus (strain DPC 4571).